Reading from the N-terminus, the 259-residue chain is Cytochrome c oxidase subunit 3 (259 aa).

The next 7 membrane-spanning stretches (helical) occupy residues P13 to F33, H36 to W56, G80 to F100, F125 to A145, A160 to M180, F195 to I215, and A237 to W257.

It belongs to the cytochrome c oxidase subunit 3 family. As to quaternary structure, component of the cytochrome c oxidase (complex IV, CIV), a multisubunit enzyme composed of a catalytic core of 3 subunits and several supernumerary subunits. The complex exists as a monomer or a dimer and forms supercomplexes (SCs) in the inner mitochondrial membrane with ubiquinol-cytochrome c oxidoreductase (cytochrome b-c1 complex, complex III, CIII).

The protein localises to the mitochondrion inner membrane. It catalyses the reaction 4 Fe(II)-[cytochrome c] + O2 + 8 H(+)(in) = 4 Fe(III)-[cytochrome c] + 2 H2O + 4 H(+)(out). Component of the cytochrome c oxidase, the last enzyme in the mitochondrial electron transport chain which drives oxidative phosphorylation. The respiratory chain contains 3 multisubunit complexes succinate dehydrogenase (complex II, CII), ubiquinol-cytochrome c oxidoreductase (cytochrome b-c1 complex, complex III, CIII) and cytochrome c oxidase (complex IV, CIV), that cooperate to transfer electrons derived from NADH and succinate to molecular oxygen, creating an electrochemical gradient over the inner membrane that drives transmembrane transport and the ATP synthase. Cytochrome c oxidase is the component of the respiratory chain that catalyzes the reduction of oxygen to water. Electrons originating from reduced cytochrome c in the intermembrane space (IMS) are transferred via the dinuclear copper A center (CU(A)) of subunit 2 and heme A of subunit 1 to the active site in subunit 1, a binuclear center (BNC) formed by heme A3 and copper B (CU(B)). The BNC reduces molecular oxygen to 2 water molecules using 4 electrons from cytochrome c in the IMS and 4 protons from the mitochondrial matrix. The protein is Cytochrome c oxidase subunit 3 (COIII) of Lumbricus terrestris (Common earthworm).